The sequence spans 303 residues: MSNKLTFQEIILTLQQYWNDQGCMLMQAYDNEKGAGTMSPYTFLRAIGPEPWNAAYVEPSRRPADGRYGENPNRLYQHHQFQVVMKPSPSNIQELYLQSLERLGIDPLEHDIRFVEDNWENPSTGSAGLGWEVWLDGMEITQFTYFQQVGGLATSPVTAEVTYGLERLASYIQEVDSVYDIEWAPGVKYGEIFLQPEYEHSKYSFEVSNQDMLLENFEIFEKEAERALAQGLVHPAYDYVLKCSHTFNLLDARGAVSVTERAGYIARIRHLARSVAKTFVAERKKLGFPLLDDASRVALLAED.

The protein belongs to the class-II aminoacyl-tRNA synthetase family. In terms of assembly, tetramer of two alpha and two beta subunits.

It is found in the cytoplasm. The enzyme catalyses tRNA(Gly) + glycine + ATP = glycyl-tRNA(Gly) + AMP + diphosphate. This chain is Glycine--tRNA ligase alpha subunit, found in Streptococcus equi subsp. equi (strain 4047).